A 306-amino-acid chain; its full sequence is Ornithine carbamoyltransferase (306 aa).

Carbamoyl phosphate is bound by residues 50-53 (STRT), Gln77, Arg101, and 128-131 (HPCQ). L-ornithine is bound by residues Asn160, Asp224, and 228 to 229 (SM). Carbamoyl phosphate-binding positions include 261–262 (CL) and Arg289.

It belongs to the aspartate/ornithine carbamoyltransferase superfamily. OTCase family.

Its subcellular location is the cytoplasm. It catalyses the reaction carbamoyl phosphate + L-ornithine = L-citrulline + phosphate + H(+). The protein operates within amino-acid biosynthesis; L-arginine biosynthesis; L-arginine from L-ornithine and carbamoyl phosphate: step 1/3. In terms of biological role, reversibly catalyzes the transfer of the carbamoyl group from carbamoyl phosphate (CP) to the N(epsilon) atom of ornithine (ORN) to produce L-citrulline. The polypeptide is Ornithine carbamoyltransferase (Aquifex aeolicus (strain VF5)).